Consider the following 419-residue polypeptide: Cytosine permease (419 aa).

Residues 1 to 19 (MSQDNNFSQGPVPQSARKG) lie on the Cytoplasmic side of the membrane. The helical transmembrane segment at 20–39 (VLALTFVMLGLTFFSASMWT) threads the bilayer. The Periplasmic segment spans residues 40 to 51 (GGTLGTGLSYHD). The chain crosses the membrane as a helical span at residues 52–71 (FFLAVLIGNLLLGIYTSFLG). Residues 72 to 100 (YIGAKTGLTTHLLARFSFGVKGSWLPSLL) are Cytoplasmic-facing. A helical membrane pass occupies residues 101–120 (LGGTQVGWFGVGVAMFAIPV). The Periplasmic portion of the chain corresponds to 121-127 (GKATGLD). Residues 128–147 (INLLIAVSGLLMTVTVFFGI) traverse the membrane as a helical segment. Residues 148–152 (SALTV) lie on the Cytoplasmic side of the membrane. Residues 153 to 172 (LSLIAVPAIACLGGYSVWLA) traverse the membrane as a helical segment. Over 173–192 (VNGMGGLDALKAVVPAQPLD) the chain is Periplasmic. The helical transmembrane segment at 193–212 (FNVALALVVGSFISAGTLTA) threads the bilayer. The Cytoplasmic portion of the chain corresponds to 213-221 (DFVRFGRNA). A helical membrane pass occupies residues 222–242 (KLAVLVAMVAFFLGNSLMFIF). The Periplasmic portion of the chain corresponds to 243 to 257 (GAAGAAALGMADISD). Residues 258–277 (VMIAQGLLLPAIVVLGLNIW) traverse the membrane as a helical segment. At 278-300 (TTNDNALYASGLGFANITGMSSK) the chain is on the cytoplasmic side. The chain crosses the membrane as a helical span at residues 301–320 (TLSVINGIIGTVCALWLYNN). Phe321 is a topological domain (periplasmic). Residues 322–341 (VGWLTFLSAAIPPVGGVIIA) traverse the membrane as a helical segment. The Cytoplasmic portion of the chain corresponds to 342–358 (DYLMNRRRYEHFATTRM). A helical membrane pass occupies residues 359–378 (MSVNWVAILAVALGIAAGHW). Residues 379–380 (LP) lie on the Periplasmic side of the membrane. A helical transmembrane segment spans residues 381-400 (GIVPVNAVLGGALSYLILNP). Topologically, residues 401–419 (ILNRKTTAAMTHVEANSVE) are cytoplasmic.

This sequence belongs to the purine-cytosine permease (2.A.39) family.

Its subcellular location is the cell inner membrane. Its function is as follows. Required for cytosine transport into the cell. In Escherichia coli O157:H7, this protein is Cytosine permease (codB).